A 128-amino-acid chain; its full sequence is NADH-quinone oxidoreductase subunit A (128 aa).

Transmembrane regions (helical) follow at residues F9 to A29, L68 to L88, and L96 to V116.

This sequence belongs to the complex I subunit 3 family. As to quaternary structure, NDH-1 is composed of 14 different subunits. Subunits NuoA, H, J, K, L, M, N constitute the membrane sector of the complex.

It is found in the cell inner membrane. It carries out the reaction a quinone + NADH + 5 H(+)(in) = a quinol + NAD(+) + 4 H(+)(out). NDH-1 shuttles electrons from NADH, via FMN and iron-sulfur (Fe-S) centers, to quinones in the respiratory chain. The immediate electron acceptor for the enzyme in this species is believed to be ubiquinone. Couples the redox reaction to proton translocation (for every two electrons transferred, four hydrogen ions are translocated across the cytoplasmic membrane), and thus conserves the redox energy in a proton gradient. This is NADH-quinone oxidoreductase subunit A from Anaeromyxobacter sp. (strain Fw109-5).